Reading from the N-terminus, the 201-residue chain is ATP synthase subunit b 2 (201 aa).

The span at 1–17 (MAEQKNPLTTPSPNADT) shows a compositional bias: polar residues. Positions 1–39 (MAEQKNPLTTPSPNADTTIVPAGSPHTHTEQPSGGHGGA) are disordered. A helical membrane pass occupies residues 47-66 (TFLSQLIWLALAFGLLYYLM).

This sequence belongs to the ATPase B chain family. As to quaternary structure, F-type ATPases have 2 components, F(1) - the catalytic core - and F(0) - the membrane proton channel. F(1) has five subunits: alpha(3), beta(3), gamma(1), delta(1), epsilon(1). F(0) has three main subunits: a(1), b(2) and c(10-14). The alpha and beta chains form an alternating ring which encloses part of the gamma chain. F(1) is attached to F(0) by a central stalk formed by the gamma and epsilon chains, while a peripheral stalk is formed by the delta and b chains.

The protein localises to the cell inner membrane. Functionally, f(1)F(0) ATP synthase produces ATP from ADP in the presence of a proton or sodium gradient. F-type ATPases consist of two structural domains, F(1) containing the extramembraneous catalytic core and F(0) containing the membrane proton channel, linked together by a central stalk and a peripheral stalk. During catalysis, ATP synthesis in the catalytic domain of F(1) is coupled via a rotary mechanism of the central stalk subunits to proton translocation. Its function is as follows. Component of the F(0) channel, it forms part of the peripheral stalk, linking F(1) to F(0). The b'-subunit is a diverged and duplicated form of b found in plants and photosynthetic bacteria. This Methylorubrum extorquens (strain PA1) (Methylobacterium extorquens) protein is ATP synthase subunit b 2 (atpF2).